Here is a 296-residue protein sequence, read N- to C-terminus: Acetylglutamate kinase (296 aa).

Substrate contacts are provided by residues 71-72, arginine 93, and asparagine 186; that span reads GG.

Belongs to the acetylglutamate kinase family. ArgB subfamily.

It is found in the cytoplasm. It catalyses the reaction N-acetyl-L-glutamate + ATP = N-acetyl-L-glutamyl 5-phosphate + ADP. The protein operates within amino-acid biosynthesis; L-arginine biosynthesis; N(2)-acetyl-L-ornithine from L-glutamate: step 2/4. Catalyzes the ATP-dependent phosphorylation of N-acetyl-L-glutamate. This is Acetylglutamate kinase from Synechococcus sp. (strain RCC307).